The following is a 641-amino-acid chain: Forkhead box protein P4 (641 aa).

Disordered stretches follow at residues 1-43 and 239-264; these read MMVE…NGEL and SFPTTKVSPPTMHPSLSNGQNTRRES. Polar residues-rich tracts occupy residues 8 to 27 and 239 to 259; these read IRSTPTSQNGVGSLPNQSDS and SFPTTKVSPPTMHPSLSNGQN. A C2H2-type zinc finger spans residues 278–303; it reads GECRWPGCEALCEDMGQFIKHLNTEH. Residues 320–341 are leucine-zipper; the sequence is VQQLEIQLAKESERLQAMMTHL. The interval 354-358 is ctbp1-binding; it reads PLNLV. The fork-head DNA-binding region spans 436 to 526; that stretch reads RPPFTYASLI…PPKMTGSPTL (91 aa). A disordered region spans residues 563 to 641; the sequence is SSGSVLHGGH…ESESPMEDLP (79 aa). Over residues 576–599 the composition is skewed to polar residues; it reads TSTGEPGNSNGSSPRLSPQYSQSI. Basic and acidic residues predominate over residues 600–611; it reads HVKEEPAEDDVR. A compositionally biased stretch (acidic residues) spans 629 to 641; the sequence is RDLESESPMEDLP.

Dimerization is required for DNA-binding. In terms of tissue distribution, first expressed in the anterior neural field of stage 15 embryos. At stage 18, localized in three domains of the brain (rostral forebrain, midbrain and hindbrain) and in the eye anlage. Cerebral and retinal expression persists at later stages with additional expression in the branchial arches, at the base of the hatching gland, and in the pancreas.

The protein localises to the nucleus. Transcriptional repressor. The chain is Forkhead box protein P4 from Xenopus laevis (African clawed frog).